A 1166-amino-acid polypeptide reads, in one-letter code: Lethal(2) giant larvae protein (1166 aa).

14 WD repeats span residues 39-72, 82-128, 131-167, 189-223, 231-263, 278-320, 328-358, 380-464, 513-595, 604-665, 709-779, 788-833, 838-928, and 942-965; these read SALAYDPVAKLMAIGTQTGAIKVFGQPGVELYAQ, ELNV…DGKL, VSSLCCSLNKDLLWIGTEGGNIYQLDLKSFTIREPVI, SIRQLPNSLNKLLIAYNRGLCVLWDMQTSAVERAY, SVGLSVNSTGTEFSWYHADGSYATWSIDNGEPP, SINR…GHKV, VIDFFVTYKEGSDDVEVLIVLLEEELCAYDL, TCNY…YNFK, KKIA…TGVL, TCMA…LRES, VRCL…KEIQ, GISI…LKPI, LTAN…LNAA, and CFTNDGEALYMMSSSELQRIALST. The interval 867–888 is disordered; that stretch reads HSGSPTKSVRSHGEGDGAGNVS. 2 disordered regions span residues 975-1002 and 1144-1166; these read VEVEPLESEDNETASLVNDGNESDKDGE and HEKTNGESENVTTKTTAHEESQF.

This sequence belongs to the WD repeat L(2)GL family. In terms of assembly, may form multimeric complexes. Interacts with mahj. Interacts with aPKC; the interaction results in phosphorylation of l(2)gl. Interacts with ball. In terms of processing, phosphorylated by aPKC which restricts l(2)gl activity to the oocyte posterior and is required for oocyte polarity formation. As to expression, expressed in the epithelial cells of the digestive tract and in gonads, in the ovary's nurse and oocyte's follicle cells.

The protein resides in the cell membrane. Its subcellular location is the secreted. It is found in the extracellular space. It localises to the extracellular matrix. Its function is as follows. Essential for the development of polarized epithelia, for cell polarity associated with asymmetric cell division of neuroblasts during development, and for oocyte polarity formation. Promotes the formation of actin-rich projections at the oocyte cortex and the posterior enrichment of par-1 which is required for oocyte polarization. Regulates the localization of axis-specifying morphogens such as stau and grk. Could act as a tumor suppressor. The polypeptide is Lethal(2) giant larvae protein (l(2)gl) (Drosophila pseudoobscura pseudoobscura (Fruit fly)).